The following is a 107-amino-acid chain: Nucleoid-associated protein GDI3467/Gdia_2910 (107 aa).

This sequence belongs to the YbaB/EbfC family. Homodimer.

The protein localises to the cytoplasm. Its subcellular location is the nucleoid. Functionally, binds to DNA and alters its conformation. May be involved in regulation of gene expression, nucleoid organization and DNA protection. This is Nucleoid-associated protein GDI3467/Gdia_2910 from Gluconacetobacter diazotrophicus (strain ATCC 49037 / DSM 5601 / CCUG 37298 / CIP 103539 / LMG 7603 / PAl5).